A 626-amino-acid chain; its full sequence is Ankyrin repeat domain-containing protein 13B (626 aa).

Position 1 is an N-acetylmethionine (Met1). 2 ANK repeats span residues 47-76 (RGRT…DVGR) and 80-109 (SGWT…YQRV). Residues 442–474 (PVPSVRGSPSSETPSPGSDSSSVSSSSSTTSCR) are disordered. Over residues 449–472 (SPSSETPSPGSDSSSVSSSSSTTS) the composition is skewed to low complexity. The region spanning 503–522 (DDDDLLQFAIQQSLLEAGSE) is the UIM 1 domain. Disordered regions lie at residues 534–590 (NSKP…DEQL) and 595–614 (ELSA…EEEE). A compositionally biased stretch (pro residues) spans 554 to 573 (PPTPQRQPAPPASVPSPRPS). UIM domains lie at 585 to 604 (SYDE…QEER) and 610 to 626 (QEEE…LTEQ).

As to quaternary structure, interacts with EGFR (ubiquitinated); the interaction is direct and may regulate EGFR internalization.

Its subcellular location is the cell membrane. The protein resides in the late endosome. The protein localises to the early endosome. Its function is as follows. Ubiquitin-binding protein that specifically recognizes and binds 'Lys-63'-linked ubiquitin. Does not bind 'Lys-48'-linked ubiquitin. Positively regulates the internalization of ligand-activated EGFR by binding to the Ub moiety of ubiquitinated EGFR at the cell membrane. The protein is Ankyrin repeat domain-containing protein 13B (ANKRD13B) of Homo sapiens (Human).